A 548-amino-acid chain; its full sequence is Serine/threonine-protein phosphatase 2A 56 kDa regulatory subunit delta 1 isoform (548 aa).

Over residues 1 to 10 (MKGIKSKMLS) the composition is skewed to basic residues. The tract at residues 1 to 75 (MKGIKSKMLS…KKVPIDTTPT (75 aa)) is disordered. The span at 27-39 (KKSNSHDSSKAPK) shows a compositional bias: basic and acidic residues. Tyrosine 96 carries the phosphotyrosine modification. A phosphoserine mark is found at serine 99, serine 109, and serine 542.

This sequence belongs to the phosphatase 2A regulatory subunit B family. In terms of assembly, PP2A consists of a common heterodimeric core enzyme, composed of a 36 kDa catalytic subunit (subunit C) and a 65 kDa constant regulatory subunit (PR65 or subunit A), that associates with a variety of regulatory subunits. Proteins that associate with the core dimer include three families of regulatory subunits B (the R2/B/PR55/B55, R3/B''/PR72/PR130/PR59 and R5/B'/B56 families), the 48 kDa variable regulatory subunit, viral proteins, and cell signaling molecules.

It is found in the cytoplasm. The protein resides in the nucleus. Functionally, the B regulatory subunit might modulate substrate selectivity and catalytic activity, and might also direct the localization of the catalytic enzyme to a particular subcellular compartment. Has a role in cell shape control and septum formation. This chain is Serine/threonine-protein phosphatase 2A 56 kDa regulatory subunit delta 1 isoform (par1), found in Schizosaccharomyces pombe (strain 972 / ATCC 24843) (Fission yeast).